Reading from the N-terminus, the 359-residue chain is Protein Wnt-5a (359 aa).

An N-terminal signal peptide occupies residues 1–20; the sequence is MATTHLTAALALLCALLQVD. Residues C83 and C94 are joined by a disulfide bond. 2 N-linked (GlcNAc...) asparagine glycosylation sites follow: N93 and N99. 10 disulfides stabilise this stretch: C133-C141, C143-C161, C217-C231, C219-C226, C288-C319, C304-C314, C318-C358, C334-C349, C336-C346, and C341-C342. S223 carries the O-palmitoleoyl serine; by PORCN lipid modification. 2 N-linked (GlcNAc...) asparagine glycosylation sites follow: N291 and N305.

This sequence belongs to the Wnt family. In terms of processing, palmitoleoylation is required for efficient binding to frizzled receptors. Depalmitoleoylation leads to Wnt signaling pathway inhibition. In terms of tissue distribution, neuroectodermal and non-neuroectodermal tissues.

The protein resides in the secreted. Its subcellular location is the extracellular space. It is found in the extracellular matrix. Functionally, ligand for members of the frizzled family of seven transmembrane receptors. Can activate or inhibit canonical Wnt signaling, depending on receptor context. Required during embryogenesis for extension of the primary anterior-posterior axis. This is Protein Wnt-5a (WNT-5A) from Ambystoma mexicanum (Axolotl).